The chain runs to 202 residues: Small ribosomal subunit protein uS4 (202 aa).

Over residues 1 to 13 the composition is skewed to basic residues; the sequence is MSRYRGPRLRITR. Residues 1-43 form a disordered region; sequence MSRYRGPRLRITRRLGDLPGLTRKAAKRSHPPGQHGQARRKRS. The region spanning 90–152 is the S4 RNA-binding domain; sequence NRLDNVCFRL…KGSKKLAEAN (63 aa).

The protein belongs to the universal ribosomal protein uS4 family. Part of the 30S ribosomal subunit. Contacts protein S5. The interaction surface between S4 and S5 is involved in control of translational fidelity.

One of the primary rRNA binding proteins, it binds directly to 16S rRNA where it nucleates assembly of the body of the 30S subunit. Functionally, with S5 and S12 plays an important role in translational accuracy. In Prochlorococcus marinus (strain MIT 9303), this protein is Small ribosomal subunit protein uS4.